The chain runs to 701 residues: uncharacterized protein (701 aa).

This is an uncharacterized protein from Saccharomyces cerevisiae (strain ATCC 204508 / S288c) (Baker's yeast).